The chain runs to 506 residues: 2,3-bisphosphoglycerate-independent phosphoglycerate mutase (506 aa).

Asp13 and Ser63 together coordinate Mn(2+). Ser63 functions as the Phosphoserine intermediate in the catalytic mechanism. Substrate is bound by residues His124, 153-154 (RD), Arg183, Arg189, 254-257 (RADR), and Lys330. Mn(2+) is bound by residues Asp396, His400, Asp437, His438, and His456.

The protein belongs to the BPG-independent phosphoglycerate mutase family. In terms of assembly, monomer. Requires Mn(2+) as cofactor.

The enzyme catalyses (2R)-2-phosphoglycerate = (2R)-3-phosphoglycerate. It functions in the pathway carbohydrate degradation; glycolysis; pyruvate from D-glyceraldehyde 3-phosphate: step 3/5. Its function is as follows. Catalyzes the interconversion of 2-phosphoglycerate and 3-phosphoglycerate. The protein is 2,3-bisphosphoglycerate-independent phosphoglycerate mutase of Cereibacter sphaeroides (strain ATCC 17025 / ATH 2.4.3) (Rhodobacter sphaeroides).